Consider the following 128-residue polypeptide: Ribonuclease P protein component (128 aa).

The protein belongs to the RnpA family. As to quaternary structure, consists of a catalytic RNA component (M1 or rnpB) and a protein subunit.

The enzyme catalyses Endonucleolytic cleavage of RNA, removing 5'-extranucleotides from tRNA precursor.. RNaseP catalyzes the removal of the 5'-leader sequence from pre-tRNA to produce the mature 5'-terminus. It can also cleave other RNA substrates such as 4.5S RNA. The protein component plays an auxiliary but essential role in vivo by binding to the 5'-leader sequence and broadening the substrate specificity of the ribozyme. This Chromohalobacter salexigens (strain ATCC BAA-138 / DSM 3043 / CIP 106854 / NCIMB 13768 / 1H11) protein is Ribonuclease P protein component.